A 231-amino-acid polypeptide reads, in one-letter code: Orotidine 5'-phosphate decarboxylase (231 aa).

Substrate contacts are provided by residues aspartate 11, lysine 34, 61–70, threonine 117, arginine 179, glutamine 188, glycine 208, and arginine 209; that span reads DLKLHDIPNT. Catalysis depends on lysine 63, which acts as the Proton donor.

Belongs to the OMP decarboxylase family. Type 1 subfamily. As to quaternary structure, homodimer.

The catalysed reaction is orotidine 5'-phosphate + H(+) = UMP + CO2. It participates in pyrimidine metabolism; UMP biosynthesis via de novo pathway; UMP from orotate: step 2/2. Functionally, catalyzes the decarboxylation of orotidine 5'-monophosphate (OMP) to uridine 5'-monophosphate (UMP). In Streptococcus thermophilus (strain ATCC BAA-491 / LMD-9), this protein is Orotidine 5'-phosphate decarboxylase.